The primary structure comprises 103 residues: SOSS complex subunit C (103 aa).

The protein belongs to the SOSS-C family. As to quaternary structure, belongs to the multiprotein complex Integrator. Component of the SOSS complex, composed of SOSS-B (SOSS-B1/NABP2 or SOSS-B2/NABP1), SOSS-A/INTS3 and SOSS-C/INIP.

The protein localises to the nucleus. Its function is as follows. Component of the SOSS complex, a multiprotein complex that functions downstream of the MRN complex to promote DNA repair and G2/M checkpoint. The SOSS complex associates with single-stranded DNA at DNA lesions and influences diverse endpoints in the cellular DNA damage response including cell-cycle checkpoint activation, recombinational repair and maintenance of genomic stability. Required for efficient homologous recombination-dependent repair of double-strand breaks (DSBs). This Gallus gallus (Chicken) protein is SOSS complex subunit C (INIP).